The following is a 416-amino-acid chain: Tyrosine aminotransferase (416 aa).

Lys253 carries the post-translational modification N6-(pyridoxal phosphate)lysine.

It belongs to the class-I pyridoxal-phosphate-dependent aminotransferase family. As to quaternary structure, homodimer. Requires pyridoxal 5'-phosphate as cofactor. In terms of processing, the N-terminus is blocked.

Its subcellular location is the cytoplasm. The protein resides in the mitochondrion. The catalysed reaction is L-tyrosine + 2-oxoglutarate = 3-(4-hydroxyphenyl)pyruvate + L-glutamate. Its pathway is amino-acid degradation; L-phenylalanine degradation; acetoacetate and fumarate from L-phenylalanine: step 2/6. In terms of biological role, transaminase involved in tyrosine breakdown. Converts tyrosine to p-hydroxyphenylpyruvate. In Trypanosoma cruzi, this protein is Tyrosine aminotransferase.